The chain runs to 75 residues: Probable pilin MJ0431 (75 aa).

A propeptide spanning residues 1–15 (MGKMKILKKLLSKKG) is cleaved from the precursor. The short motif at 16 to 24 (QLSMEVGVL) is the QXSXEXXXL element.

The N-terminus is cleaved by the prepilin peptidase EppA, which recognizes the class III signal sequence.

Its subcellular location is the secreted. It is found in the cell surface. It localises to the fimbrium. The sequence is that of Probable pilin MJ0431 from Methanocaldococcus jannaschii (strain ATCC 43067 / DSM 2661 / JAL-1 / JCM 10045 / NBRC 100440) (Methanococcus jannaschii).